The following is a 266-amino-acid chain: Small ribosomal subunit protein uS3 (266 aa).

Residues 39-107 form the KH type-2 domain; it reads VREYLKKKLK…PVHVNIEEIR (69 aa). The segment at 218 to 266 is disordered; it reads EVAEDKRPRRNARPGDRRPRRDGEGGAPGARRGAPRRGAGKPEDGKTGE. Basic and acidic residues-rich tracts occupy residues 230–241 and 257–266; these read RPGDRRPRRDGE and GKPEDGKTGE.

The protein belongs to the universal ribosomal protein uS3 family. Part of the 30S ribosomal subunit. Forms a tight complex with proteins S10 and S14.

Its function is as follows. Binds the lower part of the 30S subunit head. Binds mRNA in the 70S ribosome, positioning it for translation. This Burkholderia multivorans (strain ATCC 17616 / 249) protein is Small ribosomal subunit protein uS3.